A 453-amino-acid chain; its full sequence is 13-hydroxylupanine O-tigloyltransferase (453 aa).

Active-site proton acceptor residues include histidine 166 and aspartate 385.

The protein belongs to the plant acyltransferase family. As to quaternary structure, monomer. In terms of tissue distribution, expressed in roots and hypocotyls. Detected in seeds, leaves and cotyledons, but not in young developing leaves.

The enzyme catalyses 13-hydroxylupanine + (2E)-2-methylbut-2-enoyl-CoA = 13-(2-methylcrotonoyloxy)lupanine + CoA. Its activity is regulated as follows. Inhibited by N-ethylmaleimide, p-chloromercuribenzoic acid and diethylpyrocarbonate (DEPC). Its function is as follows. Acyl-CoA-dependent acyltransferase involved in the synthesis of lupanine alkaloids. Can use both (-)-13alpha-hydroxymultiflorine and (+)-13alpha-hydroxylupanine as substrates. Lower activity with (-)-3beta, 13alpha-dihydroxylupanine, but no activity with (+)-epilupinine and (-)-lupinine as substrates. Tigloyl-CoA, benzoyl-CoA and, more slowly, acetyl-CoA, propionyl-CoA and 2-butenoyl-CoA can act as acyl donors. This is 13-hydroxylupanine O-tigloyltransferase (HMT/HLT) from Lupinus albus (White lupine).